We begin with the raw amino-acid sequence, 335 residues long: Geranylgeranyl pyrophosphate synthase BTS1 (335 aa).

Isopentenyl diphosphate is bound by residues Lys36, Arg39, and His68. Positions 75 and 79 each coordinate Mg(2+). Dimethylallyl diphosphate is bound at residue Arg84. Position 85 (Arg85) interacts with isopentenyl diphosphate. Residues Lys169, Thr170, Gln206, Asn213, Lys223, and Lys233 each contribute to the dimethylallyl diphosphate site.

It belongs to the FPP/GGPP synthase family. Requires Mg(2+) as cofactor.

It is found in the cytoplasm. It catalyses the reaction isopentenyl diphosphate + dimethylallyl diphosphate = (2E)-geranyl diphosphate + diphosphate. The enzyme catalyses isopentenyl diphosphate + (2E)-geranyl diphosphate = (2E,6E)-farnesyl diphosphate + diphosphate. The catalysed reaction is isopentenyl diphosphate + (2E,6E)-farnesyl diphosphate = (2E,6E,10E)-geranylgeranyl diphosphate + diphosphate. The protein operates within isoprenoid biosynthesis; farnesyl diphosphate biosynthesis; farnesyl diphosphate from geranyl diphosphate and isopentenyl diphosphate: step 1/1. Its pathway is isoprenoid biosynthesis; geranyl diphosphate biosynthesis; geranyl diphosphate from dimethylallyl diphosphate and isopentenyl diphosphate: step 1/1. It functions in the pathway isoprenoid biosynthesis; geranylgeranyl diphosphate biosynthesis; geranylgeranyl diphosphate from farnesyl diphosphate and isopentenyl diphosphate: step 1/1. Catalyzes the trans-addition of the 3 molecules of IPP onto DMAPP to form geranylgeranyl pyrophosphate. Required for the membrane attachment of YPT1 and SEC4. May be involved in vesicle trafficking and protein sorting. The polypeptide is Geranylgeranyl pyrophosphate synthase BTS1 (BTS1) (Saccharomyces cerevisiae (strain ATCC 204508 / S288c) (Baker's yeast)).